The sequence spans 182 residues: Ribulose bisphosphate carboxylase small subunit, chloroplastic 4 (182 aa).

The transit peptide at 1–41 (MSAAMMNKSVVLSKQCTKPAATPKVVTSKRSFASTVANKNR) directs the protein to the chloroplast.

It belongs to the RuBisCO small chain family. Heterohexadecamer of 8 large and 8 small subunits.

It localises to the plastid. The protein resides in the chloroplast. RuBisCO catalyzes two reactions: the carboxylation of D-ribulose 1,5-bisphosphate, the primary event in carbon dioxide fixation, as well as the oxidative fragmentation of the pentose substrate. Both reactions occur simultaneously and in competition at the same active site. Although the small subunit is not catalytic it is essential for maximal activity. This chain is Ribulose bisphosphate carboxylase small subunit, chloroplastic 4, found in Acetabularia acetabulum (Mermaid's wine glass).